A 180-amino-acid polypeptide reads, in one-letter code: NAD(P)H-quinone oxidoreductase subunit I, chloroplastic (180 aa).

2 consecutive 4Fe-4S ferredoxin-type domains span residues 55–84 and 95–124; these read GRIH…VDWR and LNYS…MTEE. Positions 64, 67, 70, 74, 104, 107, 110, and 114 each coordinate [4Fe-4S] cluster.

The protein belongs to the complex I 23 kDa subunit family. NDH is composed of at least 16 different subunits, 5 of which are encoded in the nucleus. The cofactor is [4Fe-4S] cluster.

It localises to the plastid. The protein localises to the chloroplast thylakoid membrane. The catalysed reaction is a plastoquinone + NADH + (n+1) H(+)(in) = a plastoquinol + NAD(+) + n H(+)(out). The enzyme catalyses a plastoquinone + NADPH + (n+1) H(+)(in) = a plastoquinol + NADP(+) + n H(+)(out). Functionally, NDH shuttles electrons from NAD(P)H:plastoquinone, via FMN and iron-sulfur (Fe-S) centers, to quinones in the photosynthetic chain and possibly in a chloroplast respiratory chain. The immediate electron acceptor for the enzyme in this species is believed to be plastoquinone. Couples the redox reaction to proton translocation, and thus conserves the redox energy in a proton gradient. This Dioscorea elephantipes (Elephant's foot yam) protein is NAD(P)H-quinone oxidoreductase subunit I, chloroplastic.